Consider the following 155-residue polypeptide: Large ribosomal subunit protein uL13 (155 aa).

It belongs to the universal ribosomal protein uL13 family. In terms of assembly, part of the 50S ribosomal subunit.

This protein is one of the early assembly proteins of the 50S ribosomal subunit, although it is not seen to bind rRNA by itself. It is important during the early stages of 50S assembly. The sequence is that of Large ribosomal subunit protein uL13 from Aeropyrum pernix (strain ATCC 700893 / DSM 11879 / JCM 9820 / NBRC 100138 / K1).